The primary structure comprises 139 residues: Putative pre-16S rRNA nuclease (139 aa).

Belongs to the YqgF nuclease family.

It localises to the cytoplasm. Functionally, could be a nuclease involved in processing of the 5'-end of pre-16S rRNA. The protein is Putative pre-16S rRNA nuclease of Bacillus licheniformis (strain ATCC 14580 / DSM 13 / JCM 2505 / CCUG 7422 / NBRC 12200 / NCIMB 9375 / NCTC 10341 / NRRL NRS-1264 / Gibson 46).